Reading from the N-terminus, the 198-residue chain is Translation machinery-associated protein 22 (198 aa).

Residues 100 to 171 (IIIKRSERTK…EIVEMIRQQV (72 aa)) form the SUI1 domain.

It belongs to the DENR family. As to quaternary structure, interacts with the 40S ribosomal subunit.

It localises to the cytoplasm. The sequence is that of Translation machinery-associated protein 22 (TMA22) from Cryptococcus neoformans var. neoformans serotype D (strain B-3501A) (Filobasidiella neoformans).